Here is a 250-residue protein sequence, read N- to C-terminus: Peptidyl-tRNA hydrolase (250 aa).

Y14 contributes to the tRNA binding site. H19 acts as the Proton acceptor in catalysis. Residues F64, N66, and N112 each coordinate tRNA. The tract at residues 192-250 (MGDGNQRPGGVKTDPAQLEKAPPKAQSHIRQARQNQKKPNIPESGPMAEMLKKLLGKKD) is disordered. Over residues 219–229 (HIRQARQNQKK) the composition is skewed to polar residues. Residues 241 to 250 (MLKKLLGKKD) show a composition bias toward basic and acidic residues.

It belongs to the PTH family. Monomer.

The protein resides in the cytoplasm. It carries out the reaction an N-acyl-L-alpha-aminoacyl-tRNA + H2O = an N-acyl-L-amino acid + a tRNA + H(+). In terms of biological role, hydrolyzes ribosome-free peptidyl-tRNAs (with 1 or more amino acids incorporated), which drop off the ribosome during protein synthesis, or as a result of ribosome stalling. Functionally, catalyzes the release of premature peptidyl moieties from peptidyl-tRNA molecules trapped in stalled 50S ribosomal subunits, and thus maintains levels of free tRNAs and 50S ribosomes. This Brucella suis (strain ATCC 23445 / NCTC 10510) protein is Peptidyl-tRNA hydrolase.